The primary structure comprises 1175 residues: DNA ligase 3 (1175 aa).

The interval 195–243 is disordered; it reads HDFDNDNGDGDDGDGDDNDDDDGDGDSDSDKKKKKSSGGSGSDSGSKKK. The segment covering 199-221 has biased composition (acidic residues); that stretch reads NDNGDGDDGDGDDNDDDDGDGDS. An ATP-binding site is contributed by glutamate 281. The N6-AMP-lysine intermediate role is filled by lysine 283. The ATP site is built by arginine 288 and arginine 303. Residues glutamate 334 and glutamate 432 each coordinate Mg(2+). Residues lysine 437, arginine 448, and lysine 452 each coordinate ATP. Disordered stretches follow at residues 612–669 and 829–869; these read PVGK…LKFV and KSSP…KRGR. 2 stretches are compositionally biased toward low complexity: residues 622-635 and 829-859; these read TTTT…TTTT and KSSP…SSPS. Residues 883–976 enclose the BRCT 1 domain; the sequence is PSLPIFEDVN…KLLPLHEDYI (94 aa). The tract at residues 984–1036 is disordered; the sequence is PDYSQSSSSSSMSIEEEKIVVTTTSDDPSEGNQQQQDKKVIKESKIIQSKDHS. Over residues 987–996 the composition is skewed to low complexity; sequence SQSSSSSSMS. Residues 1004-1018 are compositionally biased toward polar residues; it reads VTTTSDDPSEGNQQQ. Basic and acidic residues predominate over residues 1019–1036; the sequence is QDKKVIKESKIIQSKDHS. The region spanning 1067 to 1174 is the BRCT 2 domain; sequence HLLSIFQECI…DLLDVKNYKL (108 aa).

The protein belongs to the ATP-dependent DNA ligase family. Mg(2+) serves as cofactor.

The protein resides in the nucleus. It catalyses the reaction ATP + (deoxyribonucleotide)n-3'-hydroxyl + 5'-phospho-(deoxyribonucleotide)m = (deoxyribonucleotide)n+m + AMP + diphosphate.. In terms of biological role, the alpha isoform interacts with DNA-repair protein XRCC1 and can correct defective DNA strand-break repair and sister chromatid exchange following treatment with ionizing radiation and alkylating agents. The beta isoform does not interact with XRCC1 and may be specifically involved in the completion of homologous recombination events that occur during meiotic prophase. This Dictyostelium discoideum (Social amoeba) protein is DNA ligase 3 (lig3).